The chain runs to 848 residues: Phosphatidate phosphatase LPIN3 (848 aa).

The interval 1 to 108 is N-LIP; it reads MNYVGQLAET…VPPRLCTSPI (108 aa). Disordered stretches follow at residues 97 to 233, 271 to 298, and 314 to 373; these read EDVP…SPLR, PEEP…PGVR, and AVDS…NQHL. The Nuclear localization signal signature appears at 135–144; it reads GRRKRRRRRK. Over residues 135–146 the composition is skewed to basic residues; sequence GRRKRRRRRKPR. The segment covering 151 to 164 has biased composition (acidic residues); the sequence is DAVDSSSEELEAGA. Residues serine 155 and serine 156 each carry the phosphoserine modification. Residues 165-191 show a composition bias toward low complexity; sequence ESELTLLEKPTPESPSAQEAEEPSSQP. Serine 218 carries the phosphoserine modification. Positions 271–282 are enriched in low complexity; that stretch reads PEEPSPSSSPSE. The segment covering 342 to 358 has biased composition (polar residues); the sequence is KSWSWTTPESHTPSGHP. Phosphoserine is present on serine 460. The segment covering 536-556 has biased composition (basic and acidic residues); it reads EEHSSQREKAATRKQQGEKTE. Positions 536 to 568 are disordered; it reads EEHSSQREKAATRKQQGEKTEVLSSDDDVPDSP. Positions 587–789 are C-LIP; that stretch reads YKKSLRLSSD…RIFTVNPRGE (203 aa). Positions 641-645 match the DXDXT motif motif; it reads DIDGT. The LXXIL motif signature appears at 652–656; it reads LGHIL.

The protein belongs to the lipin family. Requires Mg(2+) as cofactor. In terms of tissue distribution, significant expression in intestine and other regions of the gastrointestinal tract.

It localises to the nucleus. It carries out the reaction a 1,2-diacyl-sn-glycero-3-phosphate + H2O = a 1,2-diacyl-sn-glycerol + phosphate. Its activity is regulated as follows. Inhibited by N-ethylmaleimide. Functionally, magnesium-dependent phosphatidate phosphatase enzyme which catalyzes the conversion of phosphatidic acid to diacylglycerol during triglyceride, phosphatidylcholine and phosphatidylethanolamine biosynthesis therefore regulates fatty acid metabolism. The chain is Phosphatidate phosphatase LPIN3 from Mus musculus (Mouse).